Consider the following 367-residue polypeptide: 3-dehydroquinate synthase (367 aa).

Residues 69-74 (DGEAFK), 103-107 (GVVGD), 127-128 (TT), lysine 140, lysine 149, and 167-170 (TLAT) each bind NAD(+). Residues glutamate 182, histidine 245, and histidine 262 each coordinate Zn(2+).

This sequence belongs to the sugar phosphate cyclases superfamily. Dehydroquinate synthase family. Requires Co(2+) as cofactor. Zn(2+) is required as a cofactor. NAD(+) serves as cofactor.

The protein localises to the cytoplasm. The enzyme catalyses 7-phospho-2-dehydro-3-deoxy-D-arabino-heptonate = 3-dehydroquinate + phosphate. Its pathway is metabolic intermediate biosynthesis; chorismate biosynthesis; chorismate from D-erythrose 4-phosphate and phosphoenolpyruvate: step 2/7. Its function is as follows. Catalyzes the conversion of 3-deoxy-D-arabino-heptulosonate 7-phosphate (DAHP) to dehydroquinate (DHQ). This Azotobacter vinelandii (strain DJ / ATCC BAA-1303) protein is 3-dehydroquinate synthase.